The following is a 119-amino-acid chain: Immunoglobulin heavy variable 2-70 (119 aa).

The signal sequence occupies residues Met1 to Ser19. Gln20 is subject to Pyrrolidone carboxylic acid. The segment at Gln20 to Ser44 is framework-1. The Ig-like domain occupies Gln20–Ile119. An intrachain disulfide couples Cys41 to Cys116. Residues Gly45 to Cys54 form a complementarity-determining-1 region. The framework-2 stretch occupies residues Val55–Leu71. The tract at residues Ile72–Lys78 is complementarity-determining-2. The framework-3 stretch occupies residues Tyr79–Cys116. Positions Ala117–Ile119 are complementarity-determining-3.

In terms of assembly, immunoglobulins are composed of two identical heavy chains and two identical light chains; disulfide-linked.

The protein localises to the secreted. It localises to the cell membrane. In terms of biological role, v region of the variable domain of immunoglobulin heavy chains that participates in the antigen recognition. Immunoglobulins, also known as antibodies, are membrane-bound or secreted glycoproteins produced by B lymphocytes. In the recognition phase of humoral immunity, the membrane-bound immunoglobulins serve as receptors which, upon binding of a specific antigen, trigger the clonal expansion and differentiation of B lymphocytes into immunoglobulins-secreting plasma cells. Secreted immunoglobulins mediate the effector phase of humoral immunity, which results in the elimination of bound antigens. The antigen binding site is formed by the variable domain of one heavy chain, together with that of its associated light chain. Thus, each immunoglobulin has two antigen binding sites with remarkable affinity for a particular antigen. The variable domains are assembled by a process called V-(D)-J rearrangement and can then be subjected to somatic hypermutations which, after exposure to antigen and selection, allow affinity maturation for a particular antigen. This Homo sapiens (Human) protein is Immunoglobulin heavy variable 2-70.